The sequence spans 257 residues: Flagellar brake protein YcgR 2 (257 aa).

A PilZ domain is found at 131 to 244; it reads QRREFFRVQT…AERTLQRVVT (114 aa).

Belongs to the YcgR family. In terms of assembly, monomer. Interacts with the flagellar basal bodies.

Its subcellular location is the bacterial flagellum basal body. In terms of biological role, acts as a flagellar brake, regulating swimming and swarming in a bis-(3'-5') cyclic diguanylic acid (c-di-GMP)-dependent manner. Binds 1 c-di-GMP dimer per subunit. Increasing levels of c-di-GMP lead to decreased motility. This Paraburkholderia phytofirmans (strain DSM 17436 / LMG 22146 / PsJN) (Burkholderia phytofirmans) protein is Flagellar brake protein YcgR 2.